Reading from the N-terminus, the 142-residue chain is Putative pre-16S rRNA nuclease (142 aa).

Belongs to the YqgF nuclease family.

The protein localises to the cytoplasm. Functionally, could be a nuclease involved in processing of the 5'-end of pre-16S rRNA. The sequence is that of Putative pre-16S rRNA nuclease from Nitratidesulfovibrio vulgaris (strain DP4) (Desulfovibrio vulgaris).